A 92-amino-acid polypeptide reads, in one-letter code: Small ribosomal subunit protein uS19 (92 aa).

This sequence belongs to the universal ribosomal protein uS19 family.

Functionally, protein S19 forms a complex with S13 that binds strongly to the 16S ribosomal RNA. The sequence is that of Small ribosomal subunit protein uS19 from Staphylococcus aureus (strain Mu3 / ATCC 700698).